Consider the following 285-residue polypeptide: Probable nudix hydrolase C6G9.05 (285 aa).

The Nudix hydrolase domain maps to 114–254 (TRFASVLMPL…DLLYVEFNID (141 aa)). The Nudix box motif lies at 153-175 (GRVEPSDGSHYYAALRETYEEIG). Mg(2+) contacts are provided by E169 and E173.

The protein belongs to the Nudix hydrolase family. PCD1 subfamily. It depends on Mn(2+) as a cofactor. Mg(2+) serves as cofactor.

Probably mediates the hydrolysis of some nucleoside diphosphate derivatives. The sequence is that of Probable nudix hydrolase C6G9.05 from Schizosaccharomyces pombe (strain 972 / ATCC 24843) (Fission yeast).